A 165-amino-acid chain; its full sequence is Protein SprT (165 aa).

The 144-residue stretch at E20 to V163 folds into the SprT-like domain. A Zn(2+)-binding site is contributed by H78. Residue E79 is part of the active site. H82 contacts Zn(2+).

It belongs to the SprT family. Zn(2+) is required as a cofactor.

Its subcellular location is the cytoplasm. The chain is Protein SprT from Shigella boydii serotype 18 (strain CDC 3083-94 / BS512).